Here is a 251-residue protein sequence, read N- to C-terminus: UPF0309 protein SGR_3073 (251 aa).

In terms of domain architecture, SIS spans 36 to 221 (VADTVASGGR…EQLVARGIEP (186 aa)).

This sequence belongs to the UPF0309 family.

This is UPF0309 protein SGR_3073 from Streptomyces griseus subsp. griseus (strain JCM 4626 / CBS 651.72 / NBRC 13350 / KCC S-0626 / ISP 5235).